The chain runs to 220 residues: MTQDEMKKAAGWAALKYVEEGSIVGVGTGSTVNHFIDALATMKDDIEGAVSSSEASTQKMKALGIPVYDLNSVDRLSVYVDGADEINDRMDMIKGGGAALTREKIVAAVAEKFICIVDNTKQVNILGEFPLPVEVIPMARSYVARQLVKLGGDPVYRQGVVTDNGNVILDVYNLKILNPKELESQINEIVGVVTNGLFAKRGADVLLVGTPDGVKTFTTK.

Substrate-binding positions include T28–T31, D81–D84, and K94–G97. Catalysis depends on E103, which acts as the Proton acceptor. K121 lines the substrate pocket.

This sequence belongs to the ribose 5-phosphate isomerase family. In terms of assembly, homodimer.

The catalysed reaction is aldehydo-D-ribose 5-phosphate = D-ribulose 5-phosphate. Its pathway is carbohydrate degradation; pentose phosphate pathway; D-ribose 5-phosphate from D-ribulose 5-phosphate (non-oxidative stage): step 1/1. Catalyzes the reversible conversion of ribose-5-phosphate to ribulose 5-phosphate. This chain is Ribose-5-phosphate isomerase A, found in Shewanella sp. (strain W3-18-1).